The primary structure comprises 97 residues: Large ribosomal subunit protein bL27 (97 aa).

Residues 1-12 (MLKMNLANLQLF) constitute a propeptide that is removed on maturation. Residues 14-38 (HKKGGGSTSNGRDSESKRLGAKAAD) form a disordered region.

It belongs to the bacterial ribosomal protein bL27 family. The N-terminus is cleaved by ribosomal processing cysteine protease Prp.

In Streptococcus mutans serotype c (strain ATCC 700610 / UA159), this protein is Large ribosomal subunit protein bL27.